Consider the following 627-residue polypeptide: Carene synthase 2, chloroplastic (627 aa).

Residues 1-36 (MSVISIVPLASKSCLYKSLMSSTHELKALCRPIVTL) constitute a chloroplast transit peptide. Residues D378, D382, and D530 each contribute to the Mg(2+) site. The short motif at 378–382 (DDMYD) is the DDXXD motif element.

This sequence belongs to the terpene synthase family. Tpsd subfamily. It depends on Mg(2+) as a cofactor. Requires Mn(2+) as cofactor.

The protein localises to the plastid. It is found in the chloroplast. The catalysed reaction is (2E)-geranyl diphosphate = (+)-car-3-ene + diphosphate. The protein operates within terpene metabolism; oleoresin biosynthesis. Terpene synthase (TPS) involved in defensive oleoresin formation in conifers in response to insect attack (e.g. white pine weevil P.strobi) or other injury. The chain is Carene synthase 2, chloroplastic (TPS-3car2) from Picea sitchensis (Sitka spruce).